Consider the following 350-residue polypeptide: Tetraacyldisaccharide 4'-kinase (350 aa).

49–56 lines the ATP pocket; the sequence is TTGGTGKT.

This sequence belongs to the LpxK family.

The enzyme catalyses a lipid A disaccharide + ATP = a lipid IVA + ADP + H(+). Its pathway is glycolipid biosynthesis; lipid IV(A) biosynthesis; lipid IV(A) from (3R)-3-hydroxytetradecanoyl-[acyl-carrier-protein] and UDP-N-acetyl-alpha-D-glucosamine: step 6/6. Transfers the gamma-phosphate of ATP to the 4'-position of a tetraacyldisaccharide 1-phosphate intermediate (termed DS-1-P) to form tetraacyldisaccharide 1,4'-bis-phosphate (lipid IVA). The protein is Tetraacyldisaccharide 4'-kinase of Chlorobaculum tepidum (strain ATCC 49652 / DSM 12025 / NBRC 103806 / TLS) (Chlorobium tepidum).